The following is a 302-amino-acid chain: Phosphatidylglycerol--prolipoprotein diacylglyceryl transferase (302 aa).

7 consecutive transmembrane segments (helical) span residues 19–39, 67–87, 108–128, 143–163, 203–223, 232–252, and 264–284; these read FGPL…LLGW, LVLW…FVFY, IWEG…AIIL, LIAP…FING, QLYE…FAIY, GALV…LENV, and LGLT…GWLL. Arg156 provides a ligand contact to a 1,2-diacyl-sn-glycero-3-phospho-(1'-sn-glycerol).

The protein belongs to the Lgt family.

It localises to the cell inner membrane. It carries out the reaction L-cysteinyl-[prolipoprotein] + a 1,2-diacyl-sn-glycero-3-phospho-(1'-sn-glycerol) = an S-1,2-diacyl-sn-glyceryl-L-cysteinyl-[prolipoprotein] + sn-glycerol 1-phosphate + H(+). Its pathway is protein modification; lipoprotein biosynthesis (diacylglyceryl transfer). In terms of biological role, catalyzes the transfer of the diacylglyceryl group from phosphatidylglycerol to the sulfhydryl group of the N-terminal cysteine of a prolipoprotein, the first step in the formation of mature lipoproteins. This is Phosphatidylglycerol--prolipoprotein diacylglyceryl transferase from Caulobacter vibrioides (strain ATCC 19089 / CIP 103742 / CB 15) (Caulobacter crescentus).